A 336-amino-acid polypeptide reads, in one-letter code: Dihydroorotate dehydrogenase (quinone) (336 aa).

FMN contacts are provided by residues 62–66 (AGLDK) and Thr86. Lys66 serves as a coordination point for substrate. 111 to 115 (NRMGF) is a substrate binding site. Residues Asn139 and Asn172 each contribute to the FMN site. Asn172 provides a ligand contact to substrate. The active-site Nucleophile is Ser175. Asn177 lines the substrate pocket. Residues Lys217 and Thr245 each contribute to the FMN site. Position 246 to 247 (246 to 247 (NT)) interacts with substrate. FMN contacts are provided by residues Gly268, Gly297, and 318-319 (YS).

This sequence belongs to the dihydroorotate dehydrogenase family. Type 2 subfamily. Monomer. FMN is required as a cofactor.

The protein localises to the cell membrane. It carries out the reaction (S)-dihydroorotate + a quinone = orotate + a quinol. It participates in pyrimidine metabolism; UMP biosynthesis via de novo pathway; orotate from (S)-dihydroorotate (quinone route): step 1/1. Its function is as follows. Catalyzes the conversion of dihydroorotate to orotate with quinone as electron acceptor. The polypeptide is Dihydroorotate dehydrogenase (quinone) (Escherichia coli (strain SE11)).